The chain runs to 491 residues: Carboxypeptidase SOL1 (491 aa).

A signal peptide spans 1-25; sequence MSKLRFFQSLLISTVICFFLPSINA. Residues 26 to 452 are Extracellular-facing; the sequence is RGGHSDHIHP…LLTQFFTETN (427 aa). Residue Asn-39 is glycosylated (N-linked (GlcNAc...) asparagine). In terms of domain architecture, Peptidase M14 spans 64 to 338; the sequence is GYMTNDDLEK…KSMLNLVASL (275 aa). Zn(2+) contacts are provided by His-125 and Glu-128. Residues 125–128 and 186–187 each bind substrate; these read HGDE and NR. His-226 provides a ligand contact to Zn(2+). The N-linked (GlcNAc...) asparagine glycan is linked to Asn-268. Tyr-286 contributes to the substrate binding site. The active-site Proton donor/acceptor is the Glu-308. The helical transmembrane segment at 453–470 threads the bilayer; sequence NGITLTLFVVVVFLCFLL. Residues 471–491 lie on the Cytoplasmic side of the membrane; it reads QRRVRFNLWKQRQSSRRSITV.

It belongs to the peptidase M14 family. Zn(2+) serves as cofactor. As to expression, expressed in roots, shoots, leaves, flowers and siliques.

Its subcellular location is the endosome membrane. Its function is as follows. Possesses in vitro carboxypeptidase activity against the C-terminal arginine and lysine residues. Involved in the maturation of CLE19. Removes the C-terminal arginine residue of CLE19 proprotein. The cleavage of the C-terminal arginine residue is necessary for CLE19 activity in vivo. Is not involved in generating active CLV3. Is not involved in CLE19 or CLV3 perception. The chain is Carboxypeptidase SOL1 from Arabidopsis thaliana (Mouse-ear cress).